We begin with the raw amino-acid sequence, 399 residues long: Transmembrane protein 237 homolog (399 aa).

Over residues 1–11 (MPPTSRPVPPP) the composition is skewed to pro residues. Residues 1–158 (MPPTSRPVPP…PHDKRNMPAK (158 aa)) are disordered. 3 stretches are compositionally biased toward basic and acidic residues: residues 36 to 45 (NQQRRFRENN), 111 to 135 (EAAK…DPRR), and 144 to 158 (KSFR…MPAK). Transmembrane regions (helical) follow at residues 222 to 242 (IANI…IFSF), 256 to 276 (MSLP…VSAI), 301 to 321 (GLIT…CIQL), and 343 to 363 (VFNV…AFKP).

This sequence belongs to the TMEM237 family.

The protein resides in the membrane. The protein localises to the cell projection. It is found in the cilium. Component of the transition zone in primary cilia. Required for ciliogenesis. In Caenorhabditis elegans, this protein is Transmembrane protein 237 homolog.